The following is a 494-amino-acid chain: MKLNKIMLAMVVMSISGTAMAHGYIENPPSRNFLCNAQGGSLNKDCGGVQYEPQSSGETADGFPQQGPVDGKLASGDNWVSVNLNQQTAERWTKVKMKAGPQEFKWKFTAAHPIADFKYYMTKQDWNPNQPLTRDSLDLTPFCVIPGGPASTTGSTTHTCNIPERTGYQVIYGAWDVSDTPGTFYNMIDAEFDGATGEVVVSEWTKSIGNIEPHDDLNAGDTVKLRMFDQQGERSDLVVEITIADAKEGKKNNWSHALASKLNNTHQDIRAGKKDSKGTVTATHGANAIFINANSNILRAEVQIEKSPAGEVSATDASFSANGMKKEYQMADGALAIHFDVKTMGSMDLEAKVFAADNSVKGYKDMTLEDASQHVSIAMTGLKAGKHTLVILGTDAQGKTQQQSIDFMVKGETVKPEVKPEVKPEVDGANKQCTAPAWSNKSSYQAKDTVTHNGRIYMSKWWADKASVPGDAAVTDTTGNGSGWGKVWEDKGAC.

The first 21 residues, 1–21 (MKLNKIMLAMVVMSISGTAMA), serve as a signal peptide directing secretion. The Chitin-binding type-4 domain maps to 22 to 192 (HGYIENPPSR…TFYNMIDAEF (171 aa)). The Chitin-binding type-3 domain occupies 435-484 (APAWSNKSSYQAKDTVTHNGRIYMSKWWADKASVPGDAAVTDTTGNGSGW). Residues 474–494 (VTDTTGNGSGWGKVWEDKGAC) form a disordered region.

This sequence belongs to the GbpA family.

It localises to the secreted. Its function is as follows. Probably interacts with GlcNAc residues. May promote attachment to both epithelial cell surfaces and chitin. The chain is GlcNAc-binding protein A from Yersinia enterocolitica serotype O:8 / biotype 1B (strain NCTC 13174 / 8081).